Here is a 266-residue protein sequence, read N- to C-terminus: Dolichol-phosphate mannosyltransferase subunit 1 (266 aa).

Residues 1-19 show a composition bias toward low complexity; sequence MASPGASRGASAATAAAAS. A disordered region spans residues 1-31; the sequence is MASPGASRGASAATAAAASPRPPQGRSSRRD. Ala2 carries the N-acetylalanine modification. Position 3 is a phosphoserine (Ser3). 11 residues coordinate GDP-alpha-D-mannose: Pro38, Tyr40, Glu42, Ile69, Asp71, Asp124, Ala125, Asp126, Arg153, Arg240, and Lys246. Asp126 is a binding site for Mg(2+). Asp126 lines the Mn(2+) pocket.

It belongs to the glycosyltransferase 2 family. Component of the dolichol-phosphate mannose (DPM) synthase complex composed of DPM1, DPM2 and DPM3; within the complex, directly interacts with DPM3. This interaction may stabilize DPM1. Mg(2+) is required as a cofactor. Mn(2+) serves as cofactor. Requires Ca(2+) as cofactor.

Its subcellular location is the endoplasmic reticulum. The enzyme catalyses a di-trans,poly-cis-dolichyl phosphate + GDP-alpha-D-mannose = a di-trans,poly-cis-dolichyl beta-D-mannosyl phosphate + GDP. Its pathway is protein modification; protein glycosylation. Transfers mannose from GDP-mannose to dolichol monophosphate to form dolichol phosphate mannose (Dol-P-Man) which is the mannosyl donor in pathways leading to N-glycosylation, glycosyl phosphatidylinositol membrane anchoring, and O-mannosylation of proteins; catalytic subunit of the dolichol-phosphate mannose (DPM) synthase complex. This is Dolichol-phosphate mannosyltransferase subunit 1 (DPM1) from Cricetulus griseus (Chinese hamster).